The sequence spans 227 residues: Pyridoxal 5'-phosphate synthase subunit PdxT (227 aa).

Gly-52–Ser-54 serves as a coordination point for L-glutamine. The Nucleophile role is filled by Cys-84. Residues Arg-118 and Ile-149–Arg-150 contribute to the L-glutamine site. Residues His-189 and Glu-191 each act as charge relay system in the active site.

The protein belongs to the glutaminase PdxT/SNO family. In terms of assembly, in the presence of PdxS, forms a dodecamer of heterodimers. Only shows activity in the heterodimer.

It carries out the reaction aldehydo-D-ribose 5-phosphate + D-glyceraldehyde 3-phosphate + L-glutamine = pyridoxal 5'-phosphate + L-glutamate + phosphate + 3 H2O + H(+). The enzyme catalyses L-glutamine + H2O = L-glutamate + NH4(+). It participates in cofactor biosynthesis; pyridoxal 5'-phosphate biosynthesis. Its function is as follows. Catalyzes the hydrolysis of glutamine to glutamate and ammonia as part of the biosynthesis of pyridoxal 5'-phosphate. The resulting ammonia molecule is channeled to the active site of PdxS. The protein is Pyridoxal 5'-phosphate synthase subunit PdxT of Renibacterium salmoninarum (strain ATCC 33209 / DSM 20767 / JCM 11484 / NBRC 15589 / NCIMB 2235).